The chain runs to 187 residues: Virulence protein ATR13 (187 aa).

The signal sequence occupies residues 1–19 (MRLVHAVLLPGIIVFVSNG). Residues 38 to 41 (RQLR) carry the RxLR motif. A leucine heptad repeat region region spans residues 50–92 (LSRASFGLGKAQDPLDKFFRKIINSRKPIETSYSAKGIHEKII). Tandem repeats lie at residues 93 to 103 (KAYDRHVFESK), 104 to 114 (KAHDRHVSKSK), 115 to 125 (KAHGRHVSKSK), and 126 to 136 (MAHDRHVSKSE). The interval 93–136 (KAYDRHVFESKKAHDRHVSKSKKAHGRHVSKSKMAHDRHVSKSE) is 4 X 11 AA tandem repeats. The disordered stretch occupies residues 104-136 (KAHDRHVSKSKKAHGRHVSKSKMAHDRHVSKSE). Residues 111 to 125 (SKSKKAHGRHVSKSK) show a composition bias toward basic residues. Over residues 126-136 (MAHDRHVSKSE) the composition is skewed to basic and acidic residues. The interval 137 to 187 (KAPIQYASVADYLKKIYPGTDIERIVSTLKRHDEVGAKDLGAKLQTAVASQ) is highly variable C-terminus domain.

The protein belongs to the RxLR effector family.

It localises to the secreted. It is found in the host nucleus. Its subcellular location is the host nucleolus. The protein resides in the host cytoplasm. Its function is as follows. Secreted effector that acts as an elicitor of hypersensitive response (HR) specifically on plants carrying defense protein RPP13. Recognition of ATR13 by RPP13 initiates defense responses that are effective against oomycete, bacterial and viral pathogens. Due to high polymorphism, ATR13-Emoy2 does not recognize RPP13-Nd, the RPP13 defense protein from Arabidopsis thaliana ecotype Niederzenz. ATR13-Emoy2 is recognized by RPP13 variants RPP13-UKID44, RPP13-UKID65 and RPP13-UKID71. This chain is Virulence protein ATR13, found in Hyaloperonospora arabidopsidis (strain Emoy2) (Downy mildew agent).